We begin with the raw amino-acid sequence, 28 residues long: Ranatuerin-2LT (28 aa).

A disulfide bridge connects residues Cys-23 and Cys-28.

Expressed by the skin glands.

It is found in the secreted. Functionally, has antibacterial activity. The chain is Ranatuerin-2LT from Rana latastei (Italian agile frog).